Consider the following 139-residue polypeptide: Putative pre-16S rRNA nuclease (139 aa).

The protein belongs to the YqgF nuclease family.

It is found in the cytoplasm. In terms of biological role, could be a nuclease involved in processing of the 5'-end of pre-16S rRNA. In Legionella pneumophila (strain Lens), this protein is Putative pre-16S rRNA nuclease.